A 118-amino-acid polypeptide reads, in one-letter code: Small ribosomal subunit protein uS13 (118 aa).

The segment at 91–118 (HRRSLPVRGQRTKTNARTRKGPRKPIKA) is disordered.

Belongs to the universal ribosomal protein uS13 family. Part of the 30S ribosomal subunit. Forms a loose heterodimer with protein S19. Forms two bridges to the 50S subunit in the 70S ribosome.

Its function is as follows. Located at the top of the head of the 30S subunit, it contacts several helices of the 16S rRNA. In the 70S ribosome it contacts the 23S rRNA (bridge B1a) and protein L5 of the 50S subunit (bridge B1b), connecting the 2 subunits; these bridges are implicated in subunit movement. Contacts the tRNAs in the A and P-sites. The polypeptide is Small ribosomal subunit protein uS13 (Francisella philomiragia subsp. philomiragia (strain ATCC 25017 / CCUG 19701 / FSC 153 / O#319-036)).